Reading from the N-terminus, the 945-residue chain is Probable inorganic carbon transporter subunit DabA (945 aa).

Residues Cys-408, Asp-410, His-651, and Cys-666 each contribute to the Zn(2+) site.

Belongs to the inorganic carbon transporter (TC 9.A.2) DabA family. In terms of assembly, forms a complex with DabB. The cofactor is Zn(2+).

The protein localises to the cell inner membrane. Part of an energy-coupled inorganic carbon pump. The protein is Probable inorganic carbon transporter subunit DabA of Sulfurihydrogenibium azorense (strain DSM 15241 / OCM 825 / Az-Fu1).